The following is a 331-amino-acid chain: Glycerophosphodiester phosphodiesterase 1 (331 aa).

Topologically, residues 1-3 (MWL) are cytoplasmic. A helical transmembrane segment spans residues 4-24 (WEDQGGLLGPFSFVLVLLLVV). Residues 25–248 (TRSPFNACVL…PRYSVFWKQS (224 aa)) lie on the Lumenal side of the membrane. The GP-PDE domain occupies 65–331 (VSAIAHRGGS…SMLEDCAPHF (267 aa)). Residues Glu-97 and Asp-99 each contribute to the Mg(2+) site. N-linked (GlcNAc...) asparagine glycosylation occurs at Asn-168. Asp-174 provides a ligand contact to Mg(2+). Residues 249-269 (VFVVLDILLDWSMHNVLWYLC) form a helical membrane-spanning segment. Topologically, residues 270–331 (GISAFLMQKD…SMLEDCAPHF (62 aa)) are cytoplasmic.

It belongs to the glycerophosphoryl diester phosphodiesterase family. In terms of assembly, interacts with PRAF2. Interacts with RGS16. The cofactor is Mg(2+). In terms of processing, N-glycosylated. In terms of tissue distribution, detected in heart, brain, lung, liver, skeletal muscle, kidney, pituitary and testis.

The protein localises to the cell membrane. It localises to the cytoplasmic vesicle membrane. It catalyses the reaction sn-glycero-3-phospho-1D-myo-inositol + H2O = myo-inositol + sn-glycerol 3-phosphate + H(+). It carries out the reaction 1-O-(1Z-octadecenyl)-sn-glycero-3-phospho-(N-5Z,8Z,11Z,14Z-eicosatetraenoyl)-ethanolamine + H2O = 1-O-(1Z-octadecenyl)-sn-glycero-3-phosphate + N-(5Z,8Z,11Z,14Z-eicosatetraenoyl)-ethanolamine + H(+). The catalysed reaction is 1-O-(1Z-octadecenyl)-sn-glycero-3-phospho-(N-9Z-octadecenoyl)-ethanolamine + H2O = 1-O-(1Z-octadecenyl)-sn-glycero-3-phosphate + N-(9Z-octadecenoyl) ethanolamine + H(+). The enzyme catalyses 1-O-(1Z-octadecenyl)-sn-glycero-3-phospho-N-hexadecanoyl-ethanolamine + H2O = 1-O-(1Z-octadecenyl)-sn-glycero-3-phosphate + N-hexadecanoylethanolamine + H(+). It catalyses the reaction N-(4Z,7Z,10Z,13Z,16Z,19Z)-docosahexaenoyl-sn-glycero-3-phosphoethanolamine + H2O = N-(4Z,7Z,10Z,13Z,16Z,19Z)-docosahexaenoyl ethanolamine + sn-glycerol 3-phosphate + H(+). It carries out the reaction N-eicosanoyl-sn-glycero-3-phosphoethanolamine + H2O = N-eicosanoyl ethanolamine + sn-glycerol 3-phosphate + H(+). The catalysed reaction is N-hexadecanoyl-sn-glycero-3-phosphoethanolamine + H2O = N-hexadecanoylethanolamine + sn-glycerol 3-phosphate + H(+). The enzyme catalyses N-(9Z-octadecenoyl)-sn-glycero-3-phosphoethanolamine + H2O = N-(9Z-octadecenoyl) ethanolamine + sn-glycerol 3-phosphate + H(+). It catalyses the reaction N-(5Z,8Z,11Z,14Z-eicosatetraenoyl)-sn-glycero-3-phosphoethanolamine + H2O = N-(5Z,8Z,11Z,14Z-eicosatetraenoyl)-ethanolamine + sn-glycerol 3-phosphate + H(+). Inhibited by EDTA, calcium chloride, and zinc chloride. Enhanced by magnesium chloride. Glycerophosphodiester phosphodiesterase activity can be modulated by G-protein signaling pathways. Hydrolyzes the phosphodiester bond of glycerophosphodiesters such as glycerophosphoinositol (GroPIns) and glycerophosphoethanolamine (GroPEth), to yield a glycerol phosphate and an alcohol. Hydrolyzes glycerophospho-N-acylethanolamines to N-acylethanolamines in the brain and participates in bioactive N-acylethanolamine biosynthesis such as anandamide (an endocannabinoid), N-palmitoylethanolamine (an anti-inflammatory), and N-oleoylethanolamine (an anorexic). In addition, has a lysophospholipase D activity by hydrolyzing N-acyl-lysoplasmenylethanolamine (N-acyl-lysoPlsEt) to N-acylethanolamine. However lysophospholipase D activity is lower than glycerophosphodiester phosphodiesterase activity. Has little or no activity towards glycerophosphocholine. The protein is Glycerophosphodiester phosphodiesterase 1 of Rattus norvegicus (Rat).